We begin with the raw amino-acid sequence, 587 residues long: Glutaconyl-CoA decarboxylase subunit alpha (587 aa).

The CoA carboxyltransferase N-terminal domain maps to 31–298 (LKKIEEEIHQ…YDPEFFRVDD (268 aa)). Residues 31–558 (LKKIEEEIHQ…RGYVEAFTEA (528 aa)) form a carboxyltransferase region. The region spanning 295-558 (RVDDPKAPAF…RGYVEAFTEA (264 aa)) is the CoA carboxyltransferase C-terminal domain.

Heterooctamer consisting of two alpha, two beta, two gamma and two delta subunits.

It carries out the reaction (2E)-glutaconyl-CoA + Na(+)(in) + H(+) = (2E)-butenoyl-CoA + Na(+)(out) + CO2. It functions in the pathway amino-acid degradation; L-glutamate degradation via hydroxyglutarate pathway; crotonoyl-CoA from L-glutamate: step 5/5. Decarboxylase subunit of the primary sodium pump glutaconyl-CoA decarboxylase (GCD). The protein is Glutaconyl-CoA decarboxylase subunit alpha (gcdA) of Acidaminococcus fermentans (strain ATCC 25085 / DSM 20731 / CCUG 9996 / CIP 106432 / VR4).